Consider the following 296-residue polypeptide: Farnesyl diphosphate synthase (296 aa).

Positions 46, 49, and 78 each coordinate isopentenyl diphosphate. Mg(2+)-binding residues include Asp85 and Asp91. Residue Arg96 participates in (2E)-geranyl diphosphate binding. Arg97 lines the isopentenyl diphosphate pocket. Residues Lys182, Thr183, Gln220, and Lys237 each coordinate (2E)-geranyl diphosphate.

It belongs to the FPP/GGPP synthase family. Requires Mg(2+) as cofactor.

The protein localises to the cytoplasm. It carries out the reaction isopentenyl diphosphate + (2E)-geranyl diphosphate = (2E,6E)-farnesyl diphosphate + diphosphate. In Bacillus subtilis (strain 168), this protein is Farnesyl diphosphate synthase (ispA).